We begin with the raw amino-acid sequence, 380 residues long: WAT1-related protein At2g37460 (380 aa).

A run of 10 helical transmembrane segments spans residues 16–36, 45–65, 71–91, 107–127, 142–162, 187–207, 216–236, 254–274, 282–302, and 306–326; these read FISM…SKAV, VLVV…AFYF, PKMT…EPVI, FATA…YIFG, VVGT…KGPV, GAVL…LQAI, LSLT…VALV, LTAT…GGVV, FVTA…TIIF, and MYLG…LVIW. One can recognise an EamA 1 domain in the interval 27–134; sequence AGMDILSKAV…IFGLERVKLR (108 aa). In terms of domain architecture, EamA 2 spans 196 to 325; it reads FSYACFMILQ…VICAGLYLVI (130 aa).

Belongs to the drug/metabolite transporter (DMT) superfamily. Plant drug/metabolite exporter (P-DME) (TC 2.A.7.4) family.

It localises to the membrane. This Arabidopsis thaliana (Mouse-ear cress) protein is WAT1-related protein At2g37460.